Reading from the N-terminus, the 265-residue chain is Methylthioribulose-1-phosphate dehydratase (265 aa).

C118 contacts substrate. Residues H136 and H138 each coordinate Zn(2+). E161 (proton donor/acceptor) is an active-site residue. Residue H226 coordinates Zn(2+).

It belongs to the aldolase class II family. MtnB subfamily. The cofactor is Zn(2+).

Its subcellular location is the cytoplasm. It catalyses the reaction 5-(methylsulfanyl)-D-ribulose 1-phosphate = 5-methylsulfanyl-2,3-dioxopentyl phosphate + H2O. It participates in amino-acid biosynthesis; L-methionine biosynthesis via salvage pathway; L-methionine from S-methyl-5-thio-alpha-D-ribose 1-phosphate: step 2/6. Catalyzes the dehydration of methylthioribulose-1-phosphate (MTRu-1-P) into 2,3-diketo-5-methylthiopentyl-1-phosphate (DK-MTP-1-P). This Scheffersomyces stipitis (strain ATCC 58785 / CBS 6054 / NBRC 10063 / NRRL Y-11545) (Yeast) protein is Methylthioribulose-1-phosphate dehydratase.